The chain runs to 280 residues: Large ribosomal subunit protein uL2 (280 aa).

Disordered stretches follow at residues 1-59 (MAIR…GGHK) and 223-280 (GVVM…NKKR). Composition is skewed to basic residues over residues 45–59 (VHGH…GGHK) and 269–280 (VRRRRSNKNKKR).

It belongs to the universal ribosomal protein uL2 family. Part of the 50S ribosomal subunit. Forms a bridge to the 30S subunit in the 70S ribosome.

Functionally, one of the primary rRNA binding proteins. Required for association of the 30S and 50S subunits to form the 70S ribosome, for tRNA binding and peptide bond formation. It has been suggested to have peptidyltransferase activity; this is somewhat controversial. Makes several contacts with the 16S rRNA in the 70S ribosome. This chain is Large ribosomal subunit protein uL2, found in Corynebacterium jeikeium (strain K411).